The primary structure comprises 434 residues: ATP-dependent protease ATPase subunit HslU (434 aa).

Residues Ile-18, 60 to 65 (GVGKTE), Asp-247, Glu-312, and Arg-384 contribute to the ATP site.

The protein belongs to the ClpX chaperone family. HslU subfamily. In terms of assembly, a double ring-shaped homohexamer of HslV is capped on each side by a ring-shaped HslU homohexamer. The assembly of the HslU/HslV complex is dependent on binding of ATP.

The protein resides in the cytoplasm. Its function is as follows. ATPase subunit of a proteasome-like degradation complex; this subunit has chaperone activity. The binding of ATP and its subsequent hydrolysis by HslU are essential for unfolding of protein substrates subsequently hydrolyzed by HslV. HslU recognizes the N-terminal part of its protein substrates and unfolds these before they are guided to HslV for hydrolysis. This chain is ATP-dependent protease ATPase subunit HslU, found in Sinorhizobium fredii (strain NBRC 101917 / NGR234).